Reading from the N-terminus, the 419-residue chain is Probable glycosidase C21B10.07 (419 aa).

Disordered regions lie at residues 1–20 (MGIP…AALS) and 29–67 (DPAR…NNEN). Basic and acidic residues predominate over residues 30 to 59 (PARKNESTNDVIDNHTDTEIDDHDNDHENL). The chain crosses the membrane as a helical span at residues 88-108 (FIWILIFIVALICSVLIGVLG). The region spanning 122–387 (PSYKAKTYSL…WAGSSVYSSA (266 aa)) is the GH16 domain. Catalysis depends on Glu237, which acts as the Nucleophile. Glu242 (proton donor) is an active-site residue.

This sequence belongs to the glycosyl hydrolase 16 family.

It is found in the membrane. This chain is Probable glycosidase C21B10.07, found in Schizosaccharomyces pombe (strain 972 / ATCC 24843) (Fission yeast).